A 296-amino-acid chain; its full sequence is 2-haloacid dehalogenase, configuration-inverting (296 aa).

The protein belongs to the HAD-like hydrolase superfamily. S-2-haloalkanoic acid dehalogenase family.

The catalysed reaction is an (S)-2-haloacid + H2O = a (2R)-2-hydroxycarboxylate + a halide anion + H(+). It catalyses the reaction an (R)-2-haloacid + H2O = a (2S)-2-hydroxycarboxylate + a halide anion + H(+). Its function is as follows. Dehalogenates both (S)- and (R)-2-haloalkanoic acids to the corresponding (R)- and (S)-hydroxyalkanoic acids, respectively, with inversion of configuration at C-2. Acts on 2-haloalkanoic acids whose carbon chain lengths are five or less. This is 2-haloacid dehalogenase, configuration-inverting (dhlC) from Alcaligenes xylosoxydans xylosoxydans (Achromobacter xylosoxidans).